Here is a 152-residue protein sequence, read N- to C-terminus: Ribosome maturation factor RimP (152 aa).

It belongs to the RimP family.

It localises to the cytoplasm. Required for maturation of 30S ribosomal subunits. This chain is Ribosome maturation factor RimP, found in Serratia proteamaculans (strain 568).